A 915-amino-acid polypeptide reads, in one-letter code: Translation initiation factor IF-2 (915 aa).

The span at 83–94 (QSRRAVEKEQIL) shows a compositional bias: basic and acidic residues. 3 disordered regions span residues 83–177 (QSRR…PEPP), 216–280 (EADR…KPAV), and 293–328 (ISGM…LLRE). Composition is skewed to low complexity over residues 111-129 (VRAA…EAPS) and 137-164 (APAT…LSAP). Positions 165 to 177 (LPEPVPEPVPEPP) are enriched in pro residues. The segment covering 293–305 (ISGMDDSSGTGSR) has biased composition (polar residues). Over residues 314 to 328 (MEREREQEEADLLRE) the composition is skewed to basic and acidic residues. The tr-type G domain maps to 412–582 (TRPPVVTIMG…LTEAEMRELK (171 aa)). Positions 421–428 (GHVDHGKT) are G1. Position 421–428 (421–428 (GHVDHGKT)) interacts with GTP. Residues 446–450 (GITQH) form a G2 region. The G3 stretch occupies residues 468 to 471 (DTPG). Residues 468-472 (DTPGH) and 522-525 (NKMD) each bind GTP. The tract at residues 522-525 (NKMD) is G4. Residues 558 to 560 (SAK) form a G5 region.

Belongs to the TRAFAC class translation factor GTPase superfamily. Classic translation factor GTPase family. IF-2 subfamily.

The protein resides in the cytoplasm. One of the essential components for the initiation of protein synthesis. Protects formylmethionyl-tRNA from spontaneous hydrolysis and promotes its binding to the 30S ribosomal subunits. Also involved in the hydrolysis of GTP during the formation of the 70S ribosomal complex. This Chlorobium luteolum (strain DSM 273 / BCRC 81028 / 2530) (Pelodictyon luteolum) protein is Translation initiation factor IF-2.